The following is a 200-amino-acid chain: Imidazoleglycerol-phosphate dehydratase (200 aa).

Belongs to the imidazoleglycerol-phosphate dehydratase family.

Its subcellular location is the cytoplasm. It catalyses the reaction D-erythro-1-(imidazol-4-yl)glycerol 3-phosphate = 3-(imidazol-4-yl)-2-oxopropyl phosphate + H2O. The protein operates within amino-acid biosynthesis; L-histidine biosynthesis; L-histidine from 5-phospho-alpha-D-ribose 1-diphosphate: step 6/9. This is Imidazoleglycerol-phosphate dehydratase from Chlorobium phaeovibrioides (strain DSM 265 / 1930) (Prosthecochloris vibrioformis (strain DSM 265)).